Here is a 662-residue protein sequence, read N- to C-terminus: Methionine--tRNA ligase (662 aa).

The short motif at 14–24 (YYPSGKLHLGS) is the 'HIGH' region element. Residues 308-312 (KMSKS) carry the 'KMSKS' region motif. Lys-311 contributes to the ATP binding site. A tRNA-binding domain is found at 559–662 (DFEKIELKVA…DDVPAGSLIG (104 aa)).

Belongs to the class-I aminoacyl-tRNA synthetase family. MetG type 2B subfamily. Homodimer.

It is found in the cytoplasm. The enzyme catalyses tRNA(Met) + L-methionine + ATP = L-methionyl-tRNA(Met) + AMP + diphosphate. Is required not only for elongation of protein synthesis but also for the initiation of all mRNA translation through initiator tRNA(fMet) aminoacylation. This is Methionine--tRNA ligase (metG) from Lactococcus lactis subsp. lactis (strain IL1403) (Streptococcus lactis).